The following is a 304-amino-acid chain: HTH-type transcriptional regulator AdmX (304 aa).

The region spanning 1–58 is the HTH lysR-type domain; it reads MKLRHLEIFYTVMTCGSLSRAAESLNISQPAASKSLKNAELKLGFKLFQRVRGKLLPS. Positions 18 to 37 form a DNA-binding region, H-T-H motif; it reads LSRAAESLNISQPAASKSLK.

This sequence belongs to the LysR transcriptional regulatory family.

It is found in the cytoplasm. With respect to regulation, admX-mediated transcription is inhibited by indole-3-acetic and indole-3-pyruvic acids. AdmX recognizes and binds the auxin indole-3-acetic acid (IAA), which causes conformational changes in AdmX that result in the inhibition of the expression of the andrimid gene cluster and the suppression of antibiotic production. It also recognizes indole-3-pyruvic acid (IPA), an intermediate of the main IAA biosynthetic pathway in plants and plant beneficial bacteria, which also prevents andrimid synthesis, but to a much lesser extent. In terms of biological role, positively regulates the biosynthesis of andrimid, a broad-spectrum antibiotic, by activating the expression of the adm biosynthetic gene cluster. It specifically binds to a region within the adm promoter. The polypeptide is HTH-type transcriptional regulator AdmX (Serratia plymuthica).